Reading from the N-terminus, the 152-residue chain is Lipoprotein signal peptidase (152 aa).

Helical transmembrane passes span 5–25 (LFVLSLILLVALDQLSKFWIV), 61–81 (WFFVAITVLVIGYAIYYLATH), and 84–104 (LNIWKQLALLLIISGGIGNFI). Catalysis depends on residues Asp-114 and Asp-130. Residues 125 to 145 (IFNVADSYLTVGVILLVICLW) traverse the membrane as a helical segment.

Belongs to the peptidase A8 family.

The protein resides in the cell membrane. The catalysed reaction is Release of signal peptides from bacterial membrane prolipoproteins. Hydrolyzes -Xaa-Yaa-Zaa-|-(S,diacylglyceryl)Cys-, in which Xaa is hydrophobic (preferably Leu), and Yaa (Ala or Ser) and Zaa (Gly or Ala) have small, neutral side chains.. It functions in the pathway protein modification; lipoprotein biosynthesis (signal peptide cleavage). In terms of biological role, this protein specifically catalyzes the removal of signal peptides from prolipoproteins. This is Lipoprotein signal peptidase from Streptococcus pyogenes serotype M6 (strain ATCC BAA-946 / MGAS10394).